A 206-amino-acid chain; its full sequence is Protein Mabiki (206 aa).

Residues Phe54–Val77 are disordered.

Functionally, plays a role in inducing apoptosis and is involved in the repair of head patterning defects in the embryo caused by extra maternal copies of the homeotic gene bicoid. The chain is Protein Mabiki from Drosophila melanogaster (Fruit fly).